The primary structure comprises 133 residues: Protein msa (133 aa).

4 helical membrane-spanning segments follow: residues 3–23, 27–47, 55–75, and 103–123; these read YLILSLVANLLVFGVLSAIGL, ILAAMMIVLVIPIMISGILFF, YIFFNIIFIDFYYYIYNVHLM, and FGFDEILFYTLYLLLILIVLY.

It is found in the cell membrane. Accessory element involved in the expression of sarA and several virulence factors. Modulates SarA production and/or function in a strain-dependent manner. Affects the transcription of the accessory gene regulator (agr) and genes encoding virulence factors including alpha toxin (hla) and protein A (spa). The chain is Protein msa (msa) from Staphylococcus aureus (strain USA300).